We begin with the raw amino-acid sequence, 424 residues long: 2,3-bisphosphoglycerate-independent phosphoglycerate mutase (424 aa).

The protein belongs to the BPG-independent phosphoglycerate mutase family. A-PGAM subfamily.

The enzyme catalyses (2R)-2-phosphoglycerate = (2R)-3-phosphoglycerate. The protein operates within carbohydrate degradation; glycolysis; pyruvate from D-glyceraldehyde 3-phosphate: step 3/5. Catalyzes the interconversion of 2-phosphoglycerate and 3-phosphoglycerate. The protein is 2,3-bisphosphoglycerate-independent phosphoglycerate mutase of Aeropyrum pernix (strain ATCC 700893 / DSM 11879 / JCM 9820 / NBRC 100138 / K1).